A 252-amino-acid polypeptide reads, in one-letter code: Imidazole glycerol phosphate synthase subunit HisF (252 aa).

Active-site residues include Asp11 and Asp130.

This sequence belongs to the HisA/HisF family. Heterodimer of HisH and HisF.

Its subcellular location is the cytoplasm. It carries out the reaction 5-[(5-phospho-1-deoxy-D-ribulos-1-ylimino)methylamino]-1-(5-phospho-beta-D-ribosyl)imidazole-4-carboxamide + L-glutamine = D-erythro-1-(imidazol-4-yl)glycerol 3-phosphate + 5-amino-1-(5-phospho-beta-D-ribosyl)imidazole-4-carboxamide + L-glutamate + H(+). It participates in amino-acid biosynthesis; L-histidine biosynthesis; L-histidine from 5-phospho-alpha-D-ribose 1-diphosphate: step 5/9. Functionally, IGPS catalyzes the conversion of PRFAR and glutamine to IGP, AICAR and glutamate. The HisF subunit catalyzes the cyclization activity that produces IGP and AICAR from PRFAR using the ammonia provided by the HisH subunit. This Streptococcus gordonii (strain Challis / ATCC 35105 / BCRC 15272 / CH1 / DL1 / V288) protein is Imidazole glycerol phosphate synthase subunit HisF.